Reading from the N-terminus, the 31-residue chain is Aspartate aminotransferase, cytoplasmic (31 aa).

Belongs to the class-I pyridoxal-phosphate-dependent aminotransferase family. In terms of assembly, homodimer. Pyridoxal 5'-phosphate is required as a cofactor.

The protein resides in the cytoplasm. The enzyme catalyses L-aspartate + 2-oxoglutarate = oxaloacetate + L-glutamate. It catalyses the reaction L-cysteine + 2-oxoglutarate = 2-oxo-3-sulfanylpropanoate + L-glutamate. The catalysed reaction is (2S)-2-aminobutanoate + 2-oxoglutarate = 2-oxobutanoate + L-glutamate. It carries out the reaction 3-sulfino-L-alanine + 2-oxoglutarate = 3-sulfinopyruvate + L-glutamate. Biosynthesis of L-glutamate from L-aspartate or L-cysteine. Important regulator of levels of glutamate, the major excitatory neurotransmitter of the vertebrate central nervous system. Acts as a scavenger of glutamate in brain neuroprotection. The aspartate aminotransferase activity is involved in hepatic glucose synthesis during development and in adipocyte glyceroneogenesis. Using L-cysteine as substrate, regulates levels of mercaptopyruvate, an important source of hydrogen sulfide. Mercaptopyruvate is converted into H(2)S via the action of 3-mercaptopyruvate sulfurtransferase (3MST). Hydrogen sulfide is an important synaptic modulator and neuroprotectant in the brain. In Oryctolagus cuniculus (Rabbit), this protein is Aspartate aminotransferase, cytoplasmic.